A 321-amino-acid polypeptide reads, in one-letter code: Malate dehydrogenase (321 aa).

NAD(+) is bound by residues 10–15 and aspartate 34; that span reads GSGMIG. Substrate-binding residues include arginine 83 and arginine 89. NAD(+)-binding positions include asparagine 96 and 119-121; that span reads ITN. Residues asparagine 121 and arginine 152 each contribute to the substrate site. The active-site Proton acceptor is histidine 176.

This sequence belongs to the LDH/MDH superfamily. MDH type 3 family.

It catalyses the reaction (S)-malate + NAD(+) = oxaloacetate + NADH + H(+). Catalyzes the reversible oxidation of malate to oxaloacetate. In Sinorhizobium fredii (strain NBRC 101917 / NGR234), this protein is Malate dehydrogenase.